Consider the following 149-residue polypeptide: Large ribosomal subunit protein uL15 (149 aa).

Positions 8-49 (HDLRPAAGSNKPKTRVGRGEASKGKTAGRGTKGTGARKQVPA) are disordered. The span at 31 to 45 (GKTAGRGTKGTGARK) shows a compositional bias: low complexity.

This sequence belongs to the universal ribosomal protein uL15 family. As to quaternary structure, part of the 50S ribosomal subunit.

Binds to the 23S rRNA. This is Large ribosomal subunit protein uL15 from Corynebacterium aurimucosum (strain ATCC 700975 / DSM 44827 / CIP 107346 / CN-1) (Corynebacterium nigricans).